A 259-amino-acid polypeptide reads, in one-letter code: MADS-box protein ZMM17 (259 aa).

The MADS-box domain occupies 1-61; the sequence is MGRGKIEIKR…GKMFEYCSPA (61 aa). Residues 85–175 enclose the K-box domain; the sequence is DQQILLEMTR…YRMINENQQA (91 aa). Residues 237–259 form a disordered region; sequence PTQPNLQDPAAPCGGLHGHGLQL.

As to expression, strong expression in female inflorescences (ears), but also weak expression in male inflorescences (tassels). At early stages of the development of the female spiklet, expressed in all organ primordia but later restricted to the ovule and the developing silk. At very late stages of development, expression becomes restricted to parts of the silk.

The protein resides in the nucleus. Its function is as follows. Probable transcription factor. The chain is MADS-box protein ZMM17 (M17) from Zea mays (Maize).